Reading from the N-terminus, the 85-residue chain is Beta-insect depressant toxin BmKITb (85 aa).

The first 21 residues, 1–21 (MKLFLLLVISASMLIDGLVNA), serve as a signal peptide directing secretion. The LCN-type CS-alpha/beta domain maps to 22–82 (DGYIRGSNGC…TWKSESNTCG (61 aa)). 4 cysteine pairs are disulfide-bonded: Cys31-Cys81, Cys35-Cys56, Cys42-Cys63, and Cys46-Cys65. Gly82 is subject to Glycine amide.

Expressed by the venom gland.

It is found in the secreted. In terms of biological role, depressant insect beta-toxins cause a transient contraction paralysis followed by a slow flaccid paralysis. They bind voltage-independently at site-4 of sodium channels (Nav) and shift the voltage of activation toward more negative potentials thereby affecting sodium channel activation and promoting spontaneous and repetitive firing. However, this toxin has some characteristics of excitatory toxins such as bursts of activity after the membrane has been hyperpolarized. This toxin is active only on insects. The protein is Beta-insect depressant toxin BmKITb of Olivierus martensii (Manchurian scorpion).